Reading from the N-terminus, the 112-residue chain is Divalent-cation tolerance protein CutA (112 aa).

Residues C16, H83, and H84 each contribute to the Cu cation site.

It belongs to the CutA family. Homotrimer. Cu cation serves as cofactor.

Its subcellular location is the cytoplasm. Functionally, involved in resistance toward heavy metals. This chain is Divalent-cation tolerance protein CutA, found in Shigella boydii serotype 18 (strain CDC 3083-94 / BS512).